We begin with the raw amino-acid sequence, 629 residues long: DNA mismatch repair protein MutL (629 aa).

This sequence belongs to the DNA mismatch repair MutL/HexB family.

Its function is as follows. This protein is involved in the repair of mismatches in DNA. It is required for dam-dependent methyl-directed DNA mismatch repair. May act as a 'molecular matchmaker', a protein that promotes the formation of a stable complex between two or more DNA-binding proteins in an ATP-dependent manner without itself being part of a final effector complex. This is DNA mismatch repair protein MutL from Haemophilus influenzae (strain 86-028NP).